A 238-amino-acid chain; its full sequence is Lytic polysaccharide monooxygenase NCU01050 (238 aa).

The N-terminal stretch at 1 to 15 (MKVLAPLVLASAASA) is a signal peptide. Residue His16 participates in Cu(2+) binding. Residue Glu45 coordinates O2. Intrachain disulfides connect Cys54–Cys186 and Cys156–Cys238. Asn75 is a glycosylation site (N-linked (GlcNAc...) asparagine). His99 is a binding site for Cu(2+). O2 contacts are provided by His172 and Gln181. The active-site Proton donor is the His172. Residue Tyr183 participates in Cu(2+) binding.

This sequence belongs to the polysaccharide monooxygenase AA9 family. As to quaternary structure, monomer. It depends on Cu(2+) as a cofactor. In terms of processing, N-linked glycans containing mannose and N-acetylglucosamine.

The protein resides in the secreted. The enzyme catalyses [(1-&gt;4)-beta-D-glucosyl]n+m + reduced acceptor + O2 = 4-dehydro-beta-D-glucosyl-[(1-&gt;4)-beta-D-glucosyl]n-1 + [(1-&gt;4)-beta-D-glucosyl]m + acceptor + H2O.. The protein operates within glycan metabolism; cellulose degradation. Its activity is regulated as follows. Inhibited by increasing levels of ascorbic acid. Functionally, catalyzes the oxidative cleavage of glycosidic bonds in cellulosic substrates via a copper-dependent mechanism. In the presence of an exogenous reductant ascorbic acid, degrades phosphoric acid swollen cellulose (PASC) to cello-oligosaccharides and 4-ketoaldoses, the end products oxidized at the non-reducing end. Somewhat active toward tamarind xyloglucan and konjac glucomannan, with improved activity with glucomannan in the presence of PASC. H(2)O(2) is able to substitute for O(2) in reactions with PASC, xyloglucan and glucomannan. Very weak activity on cellopentaose. No activity with birchwood xylan or ivory nut mannan. Disrupts plant cell wall polysaccharide substrates, such as recalcitrant crystalline cellulose. The protein is Lytic polysaccharide monooxygenase NCU01050 of Neurospora crassa (strain ATCC 24698 / 74-OR23-1A / CBS 708.71 / DSM 1257 / FGSC 987).